The primary structure comprises 196 residues: GTP cyclohydrolase-2 (196 aa).

A GTP-binding site is contributed by 49–53; that stretch reads RVHSE. The Zn(2+) site is built by Cys-54, Cys-65, and Cys-67. Residues Gln-70, 92-94, and Thr-114 each bind GTP; that span reads EGR. Catalysis depends on Asp-126, which acts as the Proton acceptor. The Nucleophile role is filled by Arg-128. The GTP site is built by Thr-149 and Lys-154.

The protein belongs to the GTP cyclohydrolase II family. In terms of assembly, homodimer. Requires Zn(2+) as cofactor.

It carries out the reaction GTP + 4 H2O = 2,5-diamino-6-hydroxy-4-(5-phosphoribosylamino)-pyrimidine + formate + 2 phosphate + 3 H(+). It functions in the pathway cofactor biosynthesis; riboflavin biosynthesis; 5-amino-6-(D-ribitylamino)uracil from GTP: step 1/4. Catalyzes the conversion of GTP to 2,5-diamino-6-ribosylamino-4(3H)-pyrimidinone 5'-phosphate (DARP), formate and pyrophosphate. This Escherichia coli O127:H6 (strain E2348/69 / EPEC) protein is GTP cyclohydrolase-2.